Reading from the N-terminus, the 262-residue chain is 2-aminoethylphosphonate dioxygenase (262 aa).

Position 108 (lysine 108) interacts with 2-oxoglutarate. Residues histidine 118, aspartate 120, and histidine 198 each coordinate Fe cation.

The protein belongs to the PhyH family. Fe(2+) is required as a cofactor.

It carries out the reaction (2-aminoethyl)phosphonate + 2-oxoglutarate + O2 = (1R)-(2-amino-1-hydroxyethyl)phosphonate + succinate + CO2. Its activity is regulated as follows. Activity is enhanced by ascorbate. In terms of biological role, involved in the degradation of the organophosphonate 2-aminoethylphosphonic acid (2-AEP). Catalyzes the hydroxylation of 2-aminoethylphosphonic acid to yield (2-amino-1-hydroxyethyl)phosphonic acid. This chain is 2-aminoethylphosphonate dioxygenase, found in Uncultured bacterium HF130_AEPn_1.